The chain runs to 227 residues: Germin-like protein subfamily 1 member 3 (227 aa).

Positions methionine 1–cysteine 24 are cleaved as a signal peptide. A disulfide bond links cysteine 34 and cysteine 50. The 149-residue stretch at serine 64–arginine 212 folds into the Cupin type-1 domain. Mn(2+)-binding residues include histidine 109, histidine 111, and glutamate 116. Asparagine 136 carries N-linked (GlcNAc...) asparagine glycosylation. Histidine 160 contributes to the Mn(2+) binding site.

It belongs to the germin family. Oligomer (believed to be a pentamer but probably hexamer).

It localises to the secreted. The protein localises to the extracellular space. It is found in the apoplast. In terms of biological role, may play a role in plant defense. Probably has no oxalate oxidase activity even if the active site is conserved. This Arabidopsis thaliana (Mouse-ear cress) protein is Germin-like protein subfamily 1 member 3.